Consider the following 177-residue polypeptide: R-phycoerythrin beta chain (177 aa).

2 residues coordinate (2R,3E)-phycoerythrobilin: N35 and D39. Phycourobilin is bound by residues C50, D54, and C61. (2R,3E)-phycoerythrobilin contacts are provided by residues N72, 77–78, C82, and 84–85; these read RR and RD. N72 is subject to N4-methylasparagine. 147-148 contributes to the phycourobilin binding site; sequence SQ. (2R,3E)-phycoerythrobilin is bound by residues I154 and C158.

Belongs to the phycobiliprotein family. Heterododecamer of 6 alpha and 6 beta chains. The basic functional unit of phycobiliproteins is a ring-shaped hexamer formed from two back-to-back trimers contacting via the alpha chain subunits. The trimers are composed of alpha/beta subunit heterodimers arranged around a three-fold axis of symmetry. The phycoerythrins also contain a gamma subunit which is located in the center of the hexamer. Post-translationally, contains two covalently linked phycoerythrobilin chromophores and one covalently linked phycourobilin chromophore.

Its subcellular location is the plastid. The protein resides in the chloroplast thylakoid membrane. Its function is as follows. Light-harvesting photosynthetic tetrapyrrole chromophore-protein from the phycobiliprotein complex. The polypeptide is R-phycoerythrin beta chain (rpeB) (Agarophyton chilense (Red seaweed)).